A 93-amino-acid chain; its full sequence is Small ribosomal subunit protein uS19m (93 aa).

The protein belongs to the universal ribosomal protein uS19 family.

Its subcellular location is the mitochondrion. The chain is Small ribosomal subunit protein uS19m (RPS19) from Marchantia polymorpha (Common liverwort).